A 139-amino-acid polypeptide reads, in one-letter code: Actin-depolymerizing factor 4 (139 aa).

An ADF-H domain is found at 5 to 139 (SSGVAIHDDC…SLDALKDRVK (135 aa)).

Belongs to the actin-binding proteins ADF family. Interacts with LECRK1 (via kinase domain).

Its subcellular location is the cytoplasm. It is found in the cytoskeleton. Its function is as follows. Actin-depolymerizing protein. Severs actin filaments (F-actin) and binds to actin monomers. Involved in innate immunity. Required for the expression of defense-related genes PR1A, LOX2 and CHS1 upon biotic stresses. Required for basal resistance to the fungal blast (Magnaporthe grisea), bacterial blight (Xanthomonas oryzae pv. oryzae, Xoo) and the herbivorous insect brown planthopper (Nilaparvata lugens, BPH). Involved in the promotion of seed germination. Required for the expression of alpha-amylase genes during seed germination. The protein is Actin-depolymerizing factor 4 (ADF4) of Oryza sativa subsp. japonica (Rice).